Reading from the N-terminus, the 239-residue chain is Uridylate kinase (239 aa).

10–13 (KISG) lines the ATP pocket. The involved in allosteric activation by GTP stretch occupies residues 18–23 (GEAGFG). Glycine 52 contacts UMP. ATP contacts are provided by glycine 53 and arginine 57. Residues aspartate 72 and 133 to 140 (TGNPYFST) contribute to the UMP site. ATP-binding residues include asparagine 161, tyrosine 167, and aspartate 170.

The protein belongs to the UMP kinase family. In terms of assembly, homohexamer.

The protein localises to the cytoplasm. The catalysed reaction is UMP + ATP = UDP + ADP. It participates in pyrimidine metabolism; CTP biosynthesis via de novo pathway; UDP from UMP (UMPK route): step 1/1. Allosterically activated by GTP. Inhibited by UTP. In terms of biological role, catalyzes the reversible phosphorylation of UMP to UDP. In Lacticaseibacillus paracasei (strain ATCC 334 / BCRC 17002 / CCUG 31169 / CIP 107868 / KCTC 3260 / NRRL B-441) (Lactobacillus paracasei), this protein is Uridylate kinase.